The following is a 1192-amino-acid chain: ATP-dependent helicase/deoxyribonuclease subunit B (1192 aa).

The protein belongs to the helicase family. AddB/RexB type 2 subfamily. In terms of assembly, heterodimer of AddA and RexB. Mg(2+) serves as cofactor.

In terms of biological role, the heterodimer acts as both an ATP-dependent DNA helicase and an ATP-dependent, dual-direction single-stranded exonuclease. Recognizes the chi site generating a DNA molecule suitable for the initiation of homologous recombination. This subunit has 5' -&gt; 3' nuclease activity but not helicase activity. This chain is ATP-dependent helicase/deoxyribonuclease subunit B, found in Pediococcus pentosaceus (strain ATCC 25745 / CCUG 21536 / LMG 10740 / 183-1w).